Reading from the N-terminus, the 367-residue chain is MDWLCKLEEDWKDSVFRDAVKDSLDICGAISPNERFTFVETPHHSFLLVTNILPDEHGVIKDKKLTPGDLITPSVTSVPVGNAKDLNHDIYQSSESSNGKTVLQKGCLRPNNSNYLMFNAKHIPEHHTLFTNAYVSYSKEDIQTSLSFNKSAFISKILSRCNVPGILDHNNVIHVDMLLWLLFAGPLSCCSRTHCFGYTRPDIRRPFPVVLPPILYNDSVDIKMFVNMAEIYVYGWYGDDKIKSFETTFFKNEELQAMIGELRAKYVRKSVPLWHVNSRICLFCALYLQNRLCLENLKHDVNKIPLSPIIIQDCVFNDTNISCQPTVAVGHITPGTNVTKLFPVYQLDKLLSYISLQPDGTCVITSP.

This sequence belongs to the herpesviridae UL95 family.

This Elephantid herpesvirus 1 (isolate Asian elephant/Berlin/Kiba/1998) (EIHV-1) protein is Protein U67.